Reading from the N-terminus, the 88-residue chain is MTEAKKLVRTLTGKVVSDKMEKSIVVLIERRVKHPVYGKYVSKSTKMKAHDEANDCKIGDTVTIAESRPLSKTKSWTLVKIEERATQI.

This sequence belongs to the universal ribosomal protein uS17 family. As to quaternary structure, part of the 30S ribosomal subunit.

One of the primary rRNA binding proteins, it binds specifically to the 5'-end of 16S ribosomal RNA. This chain is Small ribosomal subunit protein uS17, found in Saccharophagus degradans (strain 2-40 / ATCC 43961 / DSM 17024).